Consider the following 297-residue polypeptide: Pantothenate synthetase (297 aa).

Residue 30-37 participates in ATP binding; the sequence is MGYLHAGH. Residue His-37 is the Proton donor of the active site. Gln-61 serves as a coordination point for (R)-pantoate. Residue Gln-61 participates in beta-alanine binding. ATP is bound at residue 147-150; that stretch reads GEKD. (R)-pantoate is bound at residue Gln-153. ATP-binding positions include Val-176 and 184 to 187; that span reads LSSR.

It belongs to the pantothenate synthetase family. In terms of assembly, homodimer.

It localises to the cytoplasm. It catalyses the reaction (R)-pantoate + beta-alanine + ATP = (R)-pantothenate + AMP + diphosphate + H(+). The protein operates within cofactor biosynthesis; (R)-pantothenate biosynthesis; (R)-pantothenate from (R)-pantoate and beta-alanine: step 1/1. In terms of biological role, catalyzes the condensation of pantoate with beta-alanine in an ATP-dependent reaction via a pantoyl-adenylate intermediate. This chain is Pantothenate synthetase, found in Rhizobium etli (strain ATCC 51251 / DSM 11541 / JCM 21823 / NBRC 15573 / CFN 42).